We begin with the raw amino-acid sequence, 974 residues long: Protein bicaudal C homolog 1 (974 aa).

A disordered region spans residues 1–50; it reads MAAQGEPGYLAAQSDPGSNSERSTDSPVPGSEDDLVAGATLHSPEWSEER. Residues Ser-26, Ser-31, and Ser-43 each carry the phosphoserine modification. KH domains follow at residues 132–199 and 284–348; these read RVTL…RVRI and PVST…RQYL. Lys-398 carries the post-translational modification N6-acetyllysine. Residues Ser-576, Ser-612, and Ser-679 each carry the phosphoserine modification. Disordered stretches follow at residues 593-644, 665-719, and 783-846; these read VLSA…GDLK, GTKN…HLAP, and YKPT…KSTE. The segment covering 602 to 619 has biased composition (polar residues); sequence SIQTSGSEQTSPKSSPTE. The segment covering 690–703 has biased composition (basic and acidic residues); sequence LADKKAPGSERAAE. One can recognise an SAM domain in the interval 873 to 936; that stretch reads FKGSDLPELF…LLAISELNKN (64 aa).

The protein belongs to the BicC family. In terms of assembly, interacts (via KH domains) with ANKS6 (via SAM domain) in an RNA-dependent manner. Interacts with ANKS3.

The protein localises to the cytoplasm. In terms of biological role, putative RNA-binding protein. Acts as a negative regulator of Wnt signaling. May be involved in regulating gene expression during embryonic development. In Homo sapiens (Human), this protein is Protein bicaudal C homolog 1 (BICC1).